A 489-amino-acid chain; its full sequence is CUGBP Elav-like family member 1-B (489 aa).

RRM domains are found at residues Ile16–Ser99, Arg108–Thr188, and Ala404–Ser482.

The protein belongs to the CELF/BRUNOL family. In terms of assembly, oligomer. Oligomerization is required for RNA-binding and EDEN-dependent deadenylation. In terms of processing, phosphorylated during oocyte maturation and dephosphorylated following egg activation. Dephosphorylation is calcium dependent and correlates with the increase in the activity of EDEN-dependent deadenylation.

It is found in the nucleus. It localises to the cytoplasm. Its function is as follows. RNA-binding protein implicated in the regulation of several post-transcriptional events. May be involved in pre-mRNA alternative splicing, mRNA translation activation and stability. Mediates the rapid and sequence-specific cytoplasmic deadenylation of EDEN-containing maternal mRNAs following fertilization. Binds to AU-rich sequences (AREs) of jun mRNA. Binds to the embryonic deadenylation element (EDEN) motif localized in the 3'-UTR of maternal mRNAs. Binds to RNA containing several repeats of the consensus sequence 5'-UGU-3'. EDEN-dependent deadenylation is enhanced by the presence of an additional cis element composed of three AUU repeats. This Xenopus laevis (African clawed frog) protein is CUGBP Elav-like family member 1-B (cugbp1-b).